The primary structure comprises 126 residues: Fluoride-specific ion channel FluC 1 (126 aa).

Helical transmembrane passes span 37 to 57 (HWGT…VLAL), 67 to 87 (IALL…TFVV), and 98 to 118 (LLAA…AAAA). The Na(+) site is built by glycine 77 and serine 80.

It belongs to the fluoride channel Fluc/FEX (TC 1.A.43) family.

The protein localises to the cell inner membrane. The catalysed reaction is fluoride(in) = fluoride(out). With respect to regulation, na(+) is not transported, but it plays an essential structural role and its presence is essential for fluoride channel function. Functionally, fluoride-specific ion channel. Important for reducing fluoride concentration in the cell, thus reducing its toxicity. In Parasynechococcus marenigrum (strain WH8102), this protein is Fluoride-specific ion channel FluC 1.